The following is an 804-amino-acid chain: RasGAP-activating-like protein 1 (804 aa).

C2 domains lie at 1 to 105 and 116 to 231; these read MAKS…DSWI and VQGE…KGWF. Ca(2+)-binding residues include Asp-21, Asp-27, Asp-74, Asp-76, Asp-82, Asp-149, Asp-155, Asp-202, Asp-204, and Asp-210. The Ras-GAP domain maps to 317 to 545; it reads GLAGRFLDYL…SRVRDFLDRL (229 aa). In terms of domain architecture, PH spans 565–672; sequence AIVREGYLLK…WLSALRKASA (108 aa). A Btk-type zinc finger spans residues 674–710; it reads NPNKLAACHPGAFRSARWTCCLQAERSAAGCSRTHSA. His-682, Cys-693, Cys-694, and Cys-704 together coordinate Zn(2+).

The cofactor is Ca(2+). Highly expressed in thyroid and adrenal medulla, lower expression in brain, spinal cord and trachea. Expressed in melanocytes.

Functionally, probable inhibitory regulator of the Ras-cyclic AMP pathway. Plays a role in dendrite formation by melanocytes. This is RasGAP-activating-like protein 1 from Homo sapiens (Human).